The chain runs to 448 residues: Tubulin beta-1 chain (448 aa).

Residues Gln-11, Glu-69, Ser-138, Gly-142, Thr-143, Gly-144, Asn-204, and Asn-226 each contribute to the GTP site. Glu-69 provides a ligand contact to Mg(2+). Residues 427–448 (DATADEEGDLQEGESEYIEQEE) form a disordered region. The span at 429-448 (TADEEGDLQEGESEYIEQEE) shows a compositional bias: acidic residues.

It belongs to the tubulin family. Dimer of alpha and beta chains. A typical microtubule is a hollow water-filled tube with an outer diameter of 25 nm and an inner diameter of 15 nM. Alpha-beta heterodimers associate head-to-tail to form protofilaments running lengthwise along the microtubule wall with the beta-tubulin subunit facing the microtubule plus end conferring a structural polarity. Microtubules usually have 13 protofilaments but different protofilament numbers can be found in some organisms and specialized cells. It depends on Mg(2+) as a cofactor.

It is found in the cytoplasm. The protein localises to the cytoskeleton. Its function is as follows. Tubulin is the major constituent of microtubules, a cylinder consisting of laterally associated linear protofilaments composed of alpha- and beta-tubulin heterodimers. Microtubules grow by the addition of GTP-tubulin dimers to the microtubule end, where a stabilizing cap forms. Below the cap, tubulin dimers are in GDP-bound state, owing to GTPase activity of alpha-tubulin. This chain is Tubulin beta-1 chain, found in Brugia pahangi (Filarial nematode worm).